Consider the following 202-residue polypeptide: LexA repressor (202 aa).

The H-T-H motif DNA-binding region spans 28–48 (RAEIAQRLGFRSPNAAEEHLK). Residues Ser-119 and Lys-156 each act as for autocatalytic cleavage activity in the active site.

It belongs to the peptidase S24 family. Homodimer.

It carries out the reaction Hydrolysis of Ala-|-Gly bond in repressor LexA.. Its function is as follows. Represses a number of genes involved in the response to DNA damage (SOS response), including recA and lexA. Binds to the 16 bp palindromic sequence 5'-CTGTATATATATACAG-3'. In the presence of single-stranded DNA, RecA interacts with LexA causing an autocatalytic cleavage which disrupts the DNA-binding part of LexA, leading to derepression of the SOS regulon and eventually DNA repair. This Edwardsiella ictaluri (strain 93-146) protein is LexA repressor.